The sequence spans 380 residues: 4-hydroxy-tetrahydrodipicolinate synthase, chloroplastic (380 aa).

The tract at residues Met1–Ser44 is disordered. The N-terminal 54 residues, Met1–Ala54, are a transit peptide targeting the chloroplast. The span at Ala21–Ala33 shows a compositional bias: low complexity. Residue Thr123 participates in pyruvate binding. Residue Tyr209 is the Proton donor/acceptor of the active site. Residue Lys237 is the Schiff-base intermediate with substrate of the active site. Residue Ile276 participates in pyruvate binding.

The protein belongs to the DapA family. Tetramer of modified subunits derived from two genes in different combinations.

The protein localises to the plastid. Its subcellular location is the chloroplast. It catalyses the reaction L-aspartate 4-semialdehyde + pyruvate = (2S,4S)-4-hydroxy-2,3,4,5-tetrahydrodipicolinate + H2O + H(+). It functions in the pathway amino-acid biosynthesis; L-lysine biosynthesis via DAP pathway; (S)-tetrahydrodipicolinate from L-aspartate: step 3/4. Its activity is regulated as follows. Sensitive to lysine inhibition. This inhibition increase in an allosteric manner with increasing concentration of the inhibitor. Its function is as follows. Catalyzes the condensation of (S)-aspartate-beta-semialdehyde [(S)-ASA] and pyruvate to 4-hydroxy-tetrahydrodipicolinate (HTPA). The sequence is that of 4-hydroxy-tetrahydrodipicolinate synthase, chloroplastic from Zea mays (Maize).